Here is a 127-residue protein sequence, read N- to C-terminus: Glycine cleavage system H protein (127 aa).

Residues 24–106 (TVTVGITDHA…FEGAWIAKIK (83 aa)) enclose the Lipoyl-binding domain. Lysine 65 bears the N6-lipoyllysine mark.

The protein belongs to the GcvH family. As to quaternary structure, the glycine cleavage system is composed of four proteins: P, T, L and H. (R)-lipoate serves as cofactor.

Its function is as follows. The glycine cleavage system catalyzes the degradation of glycine. The H protein shuttles the methylamine group of glycine from the P protein to the T protein. This is Glycine cleavage system H protein from Marinomonas sp. (strain MWYL1).